Consider the following 635-residue polypeptide: MIAITLPDGSRREFPGPVTVAEVAQSIGAGLAKAALAGRIDGQLVDTSFRIEQNVDLAIVTDKDTDGLDVIRHSTAHLLAYAVKELYPEAQVTIGPVIENGFYYDFAYKRPFTPEDLVAIEKRMAELAKKDEKVTREVWSRDDAVKLFEGMGEKYKAEIIASIPEDQEIGLYREGNFVDLCRGPHVPSTGKLKVFKLMKVAGAYWRGDSNNEMLQRIYGTAWAKKEDQEAYLHMLEEAEKRDHRKLGKLLDLFHLQEEAPGMVFWHPKGWQIWQAVEQYMRGRLAGAGYSEVRTPQVMDRGLWERSGHWENYKENMFVTESEKREYAIKPMNCPGHVQIFNHGLRSYRDLPLRLAEFGACHRNEPSGALHGLMRVRGFVQDDAHIFCTEGQIMAEAKDFNDLAFSIYEDFGFENVAVKLALRPDKRAGTDEIWDHAEEGLRTALRACGVEWEELPGEGAFYGPKVEYHIKDAIGRSWQCGTLQLDLVLPERLGAEYVAEDNSRKRPVMLHRAILGSFERFLGILLENHAGALPLWLAPEQVVIMSIADAHAEYAESVAQSLQKQGFRASADLRNEKITYKIREHSLQKVPYLVVVGDKERDGNQVAVRARGNVDLGSMPVSTFVERLQNDFANKS.

The TGS domain maps to 1-61 (MIAITLPDGS…EQNVDLAIVT (61 aa)). Residues 242 to 533 (DHRKLGKLLD…LLENHAGALP (292 aa)) are catalytic. C333, H384, and H510 together coordinate Zn(2+).

The protein belongs to the class-II aminoacyl-tRNA synthetase family. In terms of assembly, homodimer. Zn(2+) is required as a cofactor.

The protein resides in the cytoplasm. The enzyme catalyses tRNA(Thr) + L-threonine + ATP = L-threonyl-tRNA(Thr) + AMP + diphosphate + H(+). Functionally, catalyzes the attachment of threonine to tRNA(Thr) in a two-step reaction: L-threonine is first activated by ATP to form Thr-AMP and then transferred to the acceptor end of tRNA(Thr). Also edits incorrectly charged L-seryl-tRNA(Thr). In Ralstonia nicotianae (strain ATCC BAA-1114 / GMI1000) (Ralstonia solanacearum), this protein is Threonine--tRNA ligase.